We begin with the raw amino-acid sequence, 82 residues long: UPF0154 protein SMU_1719c (82 aa).

The helical transmembrane segment at 4–24 threads the bilayer; the sequence is FLWILLVIIALLAGLVGGTFI.

Belongs to the UPF0154 family.

It localises to the membrane. In Streptococcus mutans serotype c (strain ATCC 700610 / UA159), this protein is UPF0154 protein SMU_1719c.